A 679-amino-acid chain; its full sequence is Acetyl-coenzyme A synthetase 2 (679 aa).

The segment at 1–32 (MTSSPTHQVVHEANNIKKQETPKEFFERQPRQ) is disordered. Positions 14 to 30 (NNIKKQETPKEFFERQP) are enriched in basic and acidic residues. Residues 207–210 (RGGK) and Thr326 each bind CoA. Residues 402–404 (GEP), 426–431 (DTYWQT), Asp517, and Arg532 contribute to the ATP site. Ser540 provides a ligand contact to CoA. Arg543 serves as a coordination point for ATP. CoA is bound at residue Arg611.

Belongs to the ATP-dependent AMP-binding enzyme family.

The catalysed reaction is acetate + ATP + CoA = acetyl-CoA + AMP + diphosphate. The polypeptide is Acetyl-coenzyme A synthetase 2 (ACS2) (Debaryomyces hansenii (strain ATCC 36239 / CBS 767 / BCRC 21394 / JCM 1990 / NBRC 0083 / IGC 2968) (Yeast)).